Consider the following 562-residue polypeptide: Dihydroxy-acid dehydratase (562 aa).

Residue aspartate 80 coordinates Mg(2+). Cysteine 121 lines the [2Fe-2S] cluster pocket. Positions 122 and 123 each coordinate Mg(2+). Residue lysine 123 is modified to N6-carboxylysine. Cysteine 194 contributes to the [2Fe-2S] cluster binding site. Glutamate 446 lines the Mg(2+) pocket. Catalysis depends on serine 472, which acts as the Proton acceptor.

Belongs to the IlvD/Edd family. Homodimer. Requires [2Fe-2S] cluster as cofactor. The cofactor is Mg(2+).

The catalysed reaction is (2R)-2,3-dihydroxy-3-methylbutanoate = 3-methyl-2-oxobutanoate + H2O. It catalyses the reaction (2R,3R)-2,3-dihydroxy-3-methylpentanoate = (S)-3-methyl-2-oxopentanoate + H2O. The protein operates within amino-acid biosynthesis; L-isoleucine biosynthesis; L-isoleucine from 2-oxobutanoate: step 3/4. It functions in the pathway amino-acid biosynthesis; L-valine biosynthesis; L-valine from pyruvate: step 3/4. Functionally, functions in the biosynthesis of branched-chain amino acids. Catalyzes the dehydration of (2R,3R)-2,3-dihydroxy-3-methylpentanoate (2,3-dihydroxy-3-methylvalerate) into 2-oxo-3-methylpentanoate (2-oxo-3-methylvalerate) and of (2R)-2,3-dihydroxy-3-methylbutanoate (2,3-dihydroxyisovalerate) into 2-oxo-3-methylbutanoate (2-oxoisovalerate), the penultimate precursor to L-isoleucine and L-valine, respectively. The protein is Dihydroxy-acid dehydratase of Staphylococcus haemolyticus (strain JCSC1435).